We begin with the raw amino-acid sequence, 897 residues long: Valine--tRNA ligase (897 aa).

A 'HIGH' region motif is present at residues 46-56 (PNVTGSLHMGH). The 'KMSKS' region signature appears at 532-536 (KMSKT). Lys-535 is a binding site for ATP. Positions 839-897 (LRRSLEKLDKESGVLAARLDNASYLANAPAELVTESRAKLAEQRAQAAILAEQLARLEN) form a coiled coil.

Belongs to the class-I aminoacyl-tRNA synthetase family. ValS type 1 subfamily. In terms of assembly, monomer.

Its subcellular location is the cytoplasm. It carries out the reaction tRNA(Val) + L-valine + ATP = L-valyl-tRNA(Val) + AMP + diphosphate. Its function is as follows. Catalyzes the attachment of valine to tRNA(Val). As ValRS can inadvertently accommodate and process structurally similar amino acids such as threonine, to avoid such errors, it has a 'posttransfer' editing activity that hydrolyzes mischarged Thr-tRNA(Val) in a tRNA-dependent manner. This Gloeobacter violaceus (strain ATCC 29082 / PCC 7421) protein is Valine--tRNA ligase.